The following is a 235-amino-acid chain: Orotidine 5'-phosphate decarboxylase (235 aa).

Substrate contacts are provided by residues D17, K39, 66 to 75 (DMKLLDIDHT), T121, R182, Q191, and R212. K68 (proton donor) is an active-site residue.

The protein belongs to the OMP decarboxylase family. Type 1 subfamily. As to quaternary structure, homodimer.

It carries out the reaction orotidine 5'-phosphate + H(+) = UMP + CO2. It functions in the pathway pyrimidine metabolism; UMP biosynthesis via de novo pathway; UMP from orotate: step 2/2. Catalyzes the decarboxylation of orotidine 5'-monophosphate (OMP) to uridine 5'-monophosphate (UMP). The polypeptide is Orotidine 5'-phosphate decarboxylase (Bartonella bacilliformis).